Reading from the N-terminus, the 360-residue chain is Phospho-N-acetylmuramoyl-pentapeptide-transferase (360 aa).

The next 10 membrane-spanning stretches (helical) occupy residues 26 to 46 (GVLATLTALVLSLFIGPFFIA), 70 to 90 (GTPTMGGALILLVVILTTLLW), 94 to 114 (GNPLVWVAVLTTLAFGAIGFV), 136 to 156 (LQSLVAFAAGGVLYALASNPV), 164 to 184 (FIPHVLIPMGAGFIVFSYFVI), 199 to 219 (GLAIVPTVMVAGALGVFAYVS), 236 to 256 (SGQMLIFCGALVGAGLGFLWF), 263 to 283 (VFMGDTGALALGAALAIVAIV), 289 to 309 (VLFIMGGVFVVETLSVIIQVV), and 339 to 359 (AVRFWIITVILVLVGLSSLKI).

It belongs to the glycosyltransferase 4 family. MraY subfamily. Requires Mg(2+) as cofactor.

The protein resides in the cell inner membrane. The enzyme catalyses UDP-N-acetyl-alpha-D-muramoyl-L-alanyl-gamma-D-glutamyl-meso-2,6-diaminopimeloyl-D-alanyl-D-alanine + di-trans,octa-cis-undecaprenyl phosphate = di-trans,octa-cis-undecaprenyl diphospho-N-acetyl-alpha-D-muramoyl-L-alanyl-D-glutamyl-meso-2,6-diaminopimeloyl-D-alanyl-D-alanine + UMP. The protein operates within cell wall biogenesis; peptidoglycan biosynthesis. Its function is as follows. Catalyzes the initial step of the lipid cycle reactions in the biosynthesis of the cell wall peptidoglycan: transfers peptidoglycan precursor phospho-MurNAc-pentapeptide from UDP-MurNAc-pentapeptide onto the lipid carrier undecaprenyl phosphate, yielding undecaprenyl-pyrophosphoryl-MurNAc-pentapeptide, known as lipid I. The polypeptide is Phospho-N-acetylmuramoyl-pentapeptide-transferase (Acidithiobacillus ferrooxidans (strain ATCC 23270 / DSM 14882 / CIP 104768 / NCIMB 8455) (Ferrobacillus ferrooxidans (strain ATCC 23270))).